Here is a 90-residue protein sequence, read N- to C-terminus: Small ribosomal subunit protein uS15 (90 aa).

It belongs to the universal ribosomal protein uS15 family. As to quaternary structure, part of the 30S ribosomal subunit. Forms a bridge to the 50S subunit in the 70S ribosome, contacting the 23S rRNA.

Its function is as follows. One of the primary rRNA binding proteins, it binds directly to 16S rRNA where it helps nucleate assembly of the platform of the 30S subunit by binding and bridging several RNA helices of the 16S rRNA. Functionally, forms an intersubunit bridge (bridge B4) with the 23S rRNA of the 50S subunit in the ribosome. The protein is Small ribosomal subunit protein uS15 of Tropheryma whipplei (strain TW08/27) (Whipple's bacillus).